A 153-amino-acid polypeptide reads, in one-letter code: Superoxide dismutase [Cu-Zn] (153 aa).

Positions 45, 47, and 62 each coordinate Cu cation. Cys-56 and Cys-145 are joined by a disulfide. Zn(2+)-binding residues include His-62, His-70, His-79, and Asp-82. His-119 contributes to the Cu cation binding site.

This sequence belongs to the Cu-Zn superoxide dismutase family. Homodimer. The cofactor is Cu cation. Requires Zn(2+) as cofactor.

It localises to the cytoplasm. It carries out the reaction 2 superoxide + 2 H(+) = H2O2 + O2. Destroys radicals which are normally produced within the cells and which are toxic to biological systems. In Drosophila erecta (Fruit fly), this protein is Superoxide dismutase [Cu-Zn].